Here is a 330-residue protein sequence, read N- to C-terminus: tRNA U34 carboxymethyltransferase (330 aa).

Carboxy-S-adenosyl-L-methionine contacts are provided by residues lysine 91, tryptophan 105, lysine 110, glycine 130, 152–154 (DPS), 181–182 (IE), methionine 196, tyrosine 200, and arginine 315.

Belongs to the class I-like SAM-binding methyltransferase superfamily. CmoB family. As to quaternary structure, homotetramer.

It catalyses the reaction carboxy-S-adenosyl-L-methionine + 5-hydroxyuridine(34) in tRNA = 5-carboxymethoxyuridine(34) in tRNA + S-adenosyl-L-homocysteine + H(+). Its function is as follows. Catalyzes carboxymethyl transfer from carboxy-S-adenosyl-L-methionine (Cx-SAM) to 5-hydroxyuridine (ho5U) to form 5-carboxymethoxyuridine (cmo5U) at position 34 in tRNAs. This chain is tRNA U34 carboxymethyltransferase, found in Shewanella halifaxensis (strain HAW-EB4).